A 333-amino-acid chain; its full sequence is Atrochrysone carboxyl ACP thioesterase (333 aa).

4 residues coordinate Zn(2+): His-104, His-106, Asp-108, and His-109. The Proton donor/acceptor role is filled by Asp-108.

Belongs to the metallo-beta-lactamase superfamily. The cofactor is Zn(2+).

The enzyme catalyses atrochrysone carboxyl-[ACP] + H2O = atrochrysone carboxylate + holo-[ACP] + H(+). Its pathway is pigment biosynthesis. Atrochrysone carboxyl ACP thioesterase; part of the gene cluster that mediates the biosynthesis of the bianthraquinone cladofulvin, a conidial pigment not required for virulence but that plays a role in fitness and resistance to environmental stresses including UV light and low-temperature stress. The pathway begins with the synthesis of atrochrysone thioester by the polyketide synthase (PKS) claG. The atrochrysone carboxyl ACP thioesterase claF then breaks the thioester bond and releases the atrochrysone carboxylic acid from claG. This compound is decarboxylated by claH to yield emodin, which is further converted to chrysophanol hydroquinone by the reductase claC and the dehydratase claB. The cytochrome P450 monooxygenase claM then catalyzes the dimerization of nataloe-emodin to cladofulvin. The sequence is that of Atrochrysone carboxyl ACP thioesterase from Passalora fulva (Tomato leaf mold).